A 91-amino-acid chain; its full sequence is MMKLVLFGIIVILFSLIGSIHGISGNYPLNPYGGYYYCTILGENEYCKKICRIHGVRYGYCYDSACWCETLKDEDVSVWNAVKKHCKNPYL.

The first 22 residues, methionine 1–glycine 22, serve as a signal peptide directing secretion. Positions serine 24 to lysine 87 constitute an LCN-type CS-alpha/beta domain. 3 disulfides stabilise this stretch: cysteine 38-cysteine 61, cysteine 47-cysteine 66, and cysteine 51-cysteine 68.

This sequence belongs to the long (3 C-C) scorpion toxin superfamily. Monomer (edited version) and heterodimer (non-edited version) of this alpha chain and a beta chain (AC P84809). Expressed by the venom gland.

The protein resides in the secreted. Its function is as follows. The heterodimer non-edited LVP1 induces lipolysis in rat adipocytes. Induction of lipolysis by LVP1 appears to be mediated through the beta-2 adrenergic receptor pathway (ADRB2). Intracerebroventricular injection is not toxic to mice. In terms of biological role, the edited BmKBTx-like, similar to beta-toxins, may modulate voltage-gated sodium channels (Nav) and may block voltage-gated potassium channels (Kv). The polypeptide is Lipolysis-activating peptide 1-alpha chain (Buthus occitanus tunetanus (Common European scorpion)).